Consider the following 921-residue polypeptide: Protein translocase subunit SecA (921 aa).

Residues Gln-85, 103 to 107 (GEGKT), and Asp-514 each bind ATP. 4 residues coordinate Zn(2+): Cys-905, Cys-907, Cys-916, and His-917.

This sequence belongs to the SecA family. In terms of assembly, monomer and homodimer. Part of the essential Sec protein translocation apparatus which comprises SecA, SecYEG and auxiliary proteins SecDF-YajC and YidC. It depends on Zn(2+) as a cofactor.

It localises to the cell inner membrane. The protein resides in the cytoplasm. The enzyme catalyses ATP + H2O + cellular proteinSide 1 = ADP + phosphate + cellular proteinSide 2.. Part of the Sec protein translocase complex. Interacts with the SecYEG preprotein conducting channel. Has a central role in coupling the hydrolysis of ATP to the transfer of proteins into and across the cell membrane, serving both as a receptor for the preprotein-SecB complex and as an ATP-driven molecular motor driving the stepwise translocation of polypeptide chains across the membrane. This chain is Protein translocase subunit SecA, found in Herminiimonas arsenicoxydans.